A 564-amino-acid chain; its full sequence is 4-hydroxy-7-methoxy-3-oxo-3,4-dihydro-2H-1,4-benzoxazin-2-yl glucoside beta-D-glucosidase 1d, chloroplastic (564 aa).

The transit peptide at 1-50 directs the protein to the chloroplast; sequence MALLAAATLNPTTHLSLRSRAGRNSENLWLRSAASSQKSKGRFCNLTVRA. Residues glutamine 92, histidine 194, and 239–240 contribute to the a beta-D-glucoside site; that span reads NE. Catalysis depends on glutamate 240, which acts as the Proton donor. A disulfide bond links cysteine 259 and cysteine 265. A beta-D-glucoside is bound by residues tyrosine 383, glutamate 456, tryptophan 504, 511–512, and phenylalanine 520; that span reads EW. The active-site Nucleophile is the glutamate 456.

It belongs to the glycosyl hydrolase 1 family. As to quaternary structure, homo- and heterohexamers. In terms of tissue distribution, expressed in young seedlings early after germination.

It localises to the plastid. The protein resides in the chloroplast. It catalyses the reaction Hydrolysis of terminal, non-reducing beta-D-glucosyl residues with release of beta-D-glucose.. It carries out the reaction DIMBOA beta-D-glucoside + H2O = DIMBOA + D-glucose. The enzyme catalyses DIBOA beta-D-glucoside + H2O = DIBOA + D-glucose. In terms of biological role, acts in defense of young plant parts against pests via the production of hydroxamic acids from hydroxamic acid glucosides. Enzymatic activity is highly correlated with plant growth. The preferred substrate is DIMBOA-beta-D-glucoside. This is 4-hydroxy-7-methoxy-3-oxo-3,4-dihydro-2H-1,4-benzoxazin-2-yl glucoside beta-D-glucosidase 1d, chloroplastic (GLU1D) from Triticum aestivum (Wheat).